Reading from the N-terminus, the 1697-residue chain is SAC3 family protein B (1697 aa).

4 disordered regions span residues 54–134, 167–280, 306–413, and 491–512; these read PPAS…QPGG, QRPN…SRSN, EATR…EQAR, and ESER…VDGD. Low complexity predominate over residues 120-134; sequence QNPSPSSGQPYQPGG. A compositionally biased stretch (basic and acidic residues) spans 178 to 192; the sequence is DGSRNFLKDHGEHSR. Polar residues predominate over residues 193–202; it reads ATSPPATSHI. The segment covering 215 to 227 has biased composition (basic and acidic residues); the sequence is RSQDSKRKSRSDI. Composition is skewed to polar residues over residues 233–243, 257–280, and 335–380; these read MGFSRRNQSPV, PLSS…SRSN, and RFST…SPAT. Residues 625–813 enclose the PCI domain; it reads NIEQMNKTSV…KCSKLVHMKK (189 aa).

This sequence belongs to the SAC3 family. In terms of assembly, interacts with SAC3A, EER5 and CML19. Interacts with UCH1 and UCH2.

It localises to the nucleus. Functionally, component of the TREX-2 complex (transcription and export complex 2), a muliprotein complex that functions in docking export-competent ribonucleoprotein particles (mRNPs) to the nuclear entrance of the nuclear pore complex (nuclear basket). TREX-2 participates in mRNA export and accurate chromatin positioning in the nucleus by tethering genes to the nuclear periphery. The polypeptide is SAC3 family protein B (Arabidopsis thaliana (Mouse-ear cress)).